We begin with the raw amino-acid sequence, 137 residues long: Probable glycine cleavage system H protein 1 (137 aa).

Residues 31-113 (VAVIGITDYA…YGEGWIFKLK (83 aa)) form the Lipoyl-binding domain. Lys-72 carries the post-translational modification N6-lipoyllysine.

It belongs to the GcvH family. The glycine cleavage system is composed of four proteins: P, T, L and H. (R)-lipoate serves as cofactor.

Functionally, the glycine cleavage system catalyzes the degradation of glycine. The H protein shuttles the methylamine group of glycine from the P protein to the T protein. This chain is Probable glycine cleavage system H protein 1, found in Saccharolobus solfataricus (strain ATCC 35092 / DSM 1617 / JCM 11322 / P2) (Sulfolobus solfataricus).